The primary structure comprises 80 residues: Cell division activator CedA (80 aa).

This sequence belongs to the CedA family.

Activates the cell division inhibited by chromosomal DNA over-replication. The chain is Cell division activator CedA from Escherichia coli (strain SMS-3-5 / SECEC).